The chain runs to 156 residues: Deoxyuridine 5'-triphosphate nucleotidohydrolase (156 aa).

Residues 74–76, Asn87, 91–93, and Lys101 contribute to the substrate site; these read RSG and TID.

It belongs to the dUTPase family. Requires Mg(2+) as cofactor.

It catalyses the reaction dUTP + H2O = dUMP + diphosphate + H(+). Its pathway is pyrimidine metabolism; dUMP biosynthesis; dUMP from dCTP (dUTP route): step 2/2. Its function is as follows. This enzyme is involved in nucleotide metabolism: it produces dUMP, the immediate precursor of thymidine nucleotides and it decreases the intracellular concentration of dUTP so that uracil cannot be incorporated into DNA. This is Deoxyuridine 5'-triphosphate nucleotidohydrolase from Wolbachia sp. subsp. Brugia malayi (strain TRS).